A 350-amino-acid polypeptide reads, in one-letter code: UDP-3-O-acylglucosamine N-acyltransferase (350 aa).

Histidine 257 acts as the Proton acceptor in catalysis.

The protein belongs to the transferase hexapeptide repeat family. LpxD subfamily. Homotrimer.

It carries out the reaction a UDP-3-O-[(3R)-3-hydroxyacyl]-alpha-D-glucosamine + a (3R)-hydroxyacyl-[ACP] = a UDP-2-N,3-O-bis[(3R)-3-hydroxyacyl]-alpha-D-glucosamine + holo-[ACP] + H(+). The protein operates within bacterial outer membrane biogenesis; LPS lipid A biosynthesis. Catalyzes the N-acylation of UDP-3-O-acylglucosamine using 3-hydroxyacyl-ACP as the acyl donor. Is involved in the biosynthesis of lipid A, a phosphorylated glycolipid that anchors the lipopolysaccharide to the outer membrane of the cell. This chain is UDP-3-O-acylglucosamine N-acyltransferase, found in Chelativorans sp. (strain BNC1).